The following is a 180-amino-acid chain: Large ribosomal subunit protein uL5 (180 aa).

The protein belongs to the universal ribosomal protein uL5 family. Part of the 50S ribosomal subunit; part of the 5S rRNA/L5/L18/L25 subcomplex. Contacts the 5S rRNA and the P site tRNA. Forms a bridge to the 30S subunit in the 70S ribosome.

Functionally, this is one of the proteins that bind and probably mediate the attachment of the 5S RNA into the large ribosomal subunit, where it forms part of the central protuberance. In the 70S ribosome it contacts protein S13 of the 30S subunit (bridge B1b), connecting the 2 subunits; this bridge is implicated in subunit movement. Contacts the P site tRNA; the 5S rRNA and some of its associated proteins might help stabilize positioning of ribosome-bound tRNAs. The protein is Large ribosomal subunit protein uL5 of Xanthomonas campestris pv. campestris (strain 8004).